The following is a 246-amino-acid chain: ATP synthase subunit b 1 (246 aa).

A helical membrane pass occupies residues Trp5–Tyr27.

This sequence belongs to the ATPase B chain family. F-type ATPases have 2 components, F(1) - the catalytic core - and F(0) - the membrane proton channel. F(1) has five subunits: alpha(3), beta(3), gamma(1), delta(1), epsilon(1). F(0) has three main subunits: a(1), b(2) and c(10-14). The alpha and beta chains form an alternating ring which encloses part of the gamma chain. F(1) is attached to F(0) by a central stalk formed by the gamma and epsilon chains, while a peripheral stalk is formed by the delta and b chains.

It localises to the cell inner membrane. Functionally, f(1)F(0) ATP synthase produces ATP from ADP in the presence of a proton or sodium gradient. F-type ATPases consist of two structural domains, F(1) containing the extramembraneous catalytic core and F(0) containing the membrane proton channel, linked together by a central stalk and a peripheral stalk. During catalysis, ATP synthesis in the catalytic domain of F(1) is coupled via a rotary mechanism of the central stalk subunits to proton translocation. Component of the F(0) channel, it forms part of the peripheral stalk, linking F(1) to F(0). The polypeptide is ATP synthase subunit b 1 (Rhodopirellula baltica (strain DSM 10527 / NCIMB 13988 / SH1)).